The primary structure comprises 730 residues: Guanylate cyclase soluble subunit alpha-2 (730 aa).

Residues 1 to 53 form a disordered region; sequence MSRRKISSESFSSLGSDYLETSPEEEGECPLSKLCWNGSRSPPGPPGSRAAAM. The region spanning 519-646 is the Guanylate cyclase domain; it reads TMLFSDIVGF…NNVTLASKFE (128 aa).

This sequence belongs to the adenylyl cyclase class-4/guanylyl cyclase family. Heterodimer of an alpha and a beta chain.

It is found in the cytoplasm. It catalyses the reaction GTP = 3',5'-cyclic GMP + diphosphate. With respect to regulation, activated by nitric oxide in the presence of magnesium or manganese ions. Functionally, has guanylyl cyclase on binding to the beta-1 subunit. The sequence is that of Guanylate cyclase soluble subunit alpha-2 (Gucy1a2) from Rattus norvegicus (Rat).